A 524-amino-acid polypeptide reads, in one-letter code: Zinc finger CCCH-type with G patch domain-containing protein (524 aa).

Positions 105–142 (SEESQPLGSNDETSTCSKGSEEEEEEEEEEEDNTSGMK) are disordered. Residues 106-122 (EESQPLGSNDETSTCSK) show a composition bias toward polar residues. Residues 125 to 137 (EEEEEEEEEEEDN) are compositionally biased toward acidic residues. The C3H1-type zinc finger occupies 184–210 (KAMKPCPFFLDGKCLFNDNCRFSHGQV). The segment at 279–298 (RGSDSSSSSSSDEEEDGAAE) is disordered. The G-patch domain maps to 326–372 (TRGIGSKLLVRMGYEFGKGLGRNAEGRVEPIQAVVLPKGKSLDQCME). 2 disordered regions span residues 375-402 (QRKK…GGAK) and 500-524 (GLQQ…MTEF). The span at 376 to 393 (RKKAGGKHKHKTSKRRPK) shows a compositional bias: basic residues.

It localises to the nucleus. Its function is as follows. Transcription repressor that specifically binds the 5'-GGAG[GA]A[GA]A-3' consensus sequence. Represses transcription by recruiting the chromatin multiprotein complex NuRD to target promoters. Negatively regulates expression of EGFR, a gene involved in cell proliferation, survival and migration. This chain is Zinc finger CCCH-type with G patch domain-containing protein (zgpat), found in Xenopus laevis (African clawed frog).